The sequence spans 805 residues: Phenylalanine--tRNA ligase beta subunit (805 aa).

The tRNA-binding domain maps to 39 to 154; it reads SEGLKKVVVG…DDATPGDPVF (116 aa). The region spanning 410–485 is the B5 domain; the sequence is VQPTTVTIDL…RLYGYDNLPA (76 aa). D463, D469, E472, and E473 together coordinate Mg(2+). Positions 712–805 constitute an FDX-ACB domain; it reads SKFPSITRDV…LTDELGAEIR (94 aa).

The protein belongs to the phenylalanyl-tRNA synthetase beta subunit family. Type 1 subfamily. In terms of assembly, tetramer of two alpha and two beta subunits. It depends on Mg(2+) as a cofactor.

It is found in the cytoplasm. The enzyme catalyses tRNA(Phe) + L-phenylalanine + ATP = L-phenylalanyl-tRNA(Phe) + AMP + diphosphate + H(+). The sequence is that of Phenylalanine--tRNA ligase beta subunit from Lactiplantibacillus plantarum (strain ATCC BAA-793 / NCIMB 8826 / WCFS1) (Lactobacillus plantarum).